The sequence spans 1279 residues: Talin-A (1279 aa).

Residues 84–365 (RPQKFKLLDG…GYIEIIMKAR (282 aa)) enclose the FERM domain.

It is found in the cytoplasm. It localises to the cytoskeleton. The protein resides in the cell cortex. Functionally, actin-binding protein that may be involved in the control of cell motility and chemotaxis. This Dictyostelium discoideum (Social amoeba) protein is Talin-A (talA).